A 210-amino-acid chain; its full sequence is 3-hexulose-6-phosphate synthase (210 aa).

The protein belongs to the HPS/KGPDC family. HPS subfamily.

The catalysed reaction is D-ribulose 5-phosphate + formaldehyde = D-arabino-hex-3-ulose 6-phosphate. It functions in the pathway one-carbon metabolism; formaldehyde assimilation via RuMP pathway; D-fructose 6-phosphate from D-ribulose 5-phosphate and formaldehyde: step 1/2. Functionally, catalyzes the condensation of ribulose 5-phosphate with formaldehyde to form 3-hexulose 6-phosphate. The protein is 3-hexulose-6-phosphate synthase of Staphylococcus aureus (strain USA300).